The chain runs to 219 residues: Probable GTP-binding protein EngB (219 aa).

The EngB-type G domain occupies 31 to 205 (VGVEIAFAGR…LSILNEWCHP (175 aa)). GTP is bound by residues 39–46 (GRSNAGKS), 66–70 (GRTQL), 84–87 (DLPG), 151–154 (TKSD), and 184–186 (FSA). Positions 46 and 68 each coordinate Mg(2+).

The protein belongs to the TRAFAC class TrmE-Era-EngA-EngB-Septin-like GTPase superfamily. EngB GTPase family. The cofactor is Mg(2+).

Necessary for normal cell division and for the maintenance of normal septation. The polypeptide is Probable GTP-binding protein EngB (Shewanella sp. (strain W3-18-1)).